Here is a 191-residue protein sequence, read N- to C-terminus: Elongation factor P (191 aa).

Position 34 is an N6-(3,6-diaminohexanoyl)-5-hydroxylysine (Lys-34).

This sequence belongs to the elongation factor P family. Post-translationally, may be beta-lysylated on the epsilon-amino group of Lys-34 by the combined action of EpmA and EpmB, and then hydroxylated on the C5 position of the same residue by EpmC (if this protein is present). Lysylation is critical for the stimulatory effect of EF-P on peptide-bond formation. The lysylation moiety may extend toward the peptidyltransferase center and stabilize the terminal 3-CCA end of the tRNA. Hydroxylation of the C5 position on Lys-34 may allow additional potential stabilizing hydrogen-bond interactions with the P-tRNA.

The protein localises to the cytoplasm. The protein operates within protein biosynthesis; polypeptide chain elongation. Involved in peptide bond synthesis. Alleviates ribosome stalling that occurs when 3 or more consecutive Pro residues or the sequence PPG is present in a protein, possibly by augmenting the peptidyl transferase activity of the ribosome. Modification of Lys-34 is required for alleviation. This is Elongation factor P from Colwellia psychrerythraea (strain 34H / ATCC BAA-681) (Vibrio psychroerythus).